Here is a 40-residue protein sequence, read N- to C-terminus: Photosystem II reaction center protein J (40 aa).

The chain crosses the membrane as a helical span at residues 8–28; it reads IPLWVIGTVAGILVIGIIGIF.

The protein belongs to the PsbJ family. In terms of assembly, PSII is composed of 1 copy each of membrane proteins PsbA, PsbB, PsbC, PsbD, PsbE, PsbF, PsbH, PsbI, PsbJ, PsbK, PsbL, PsbM, PsbT, PsbX, PsbY, PsbZ, Psb30/Ycf12, at least 3 peripheral proteins of the oxygen-evolving complex and a large number of cofactors. It forms dimeric complexes.

The protein localises to the plastid. Its subcellular location is the chloroplast thylakoid membrane. In terms of biological role, one of the components of the core complex of photosystem II (PSII). PSII is a light-driven water:plastoquinone oxidoreductase that uses light energy to abstract electrons from H(2)O, generating O(2) and a proton gradient subsequently used for ATP formation. It consists of a core antenna complex that captures photons, and an electron transfer chain that converts photonic excitation into a charge separation. The sequence is that of Photosystem II reaction center protein J from Lobularia maritima (Sweet alyssum).